The following is a 368-amino-acid chain: MMSQLAAPHVTTPHQDGFAMPAEWAPHDAVWMIWPYRTDNWREQGVPAQKTFARVAEAIAQNTPVIMGVPARYMADAQKVMPVNVTLVEMESDDAWMRDTGPTIVLNQAGERRGIDWQFNAWGGELGGLYEDWRQDEKVAAQVLDYHQAAGYAAPLILEGGSIHVDGEGTLLTTAECLLNPNRNPHLSKAEIEQLMRDYLSISTIIWLEEGVYNDETDGHIDNMCCFVRPGEVALHWTDDENDPQYARSVAAYEVLSAARDAQGRELKIWKLPAPGPLHATKEEAQGVDSGDAVERLAGSRLAGSYVNFLISNQQIIFPLLDEKTDDVARDLLQQMFPDYLISGVPAREILLGGGNIHCITQQIPTAK.

Cys359 serves as the catalytic Amidino-cysteine intermediate.

This sequence belongs to the agmatine deiminase family.

The catalysed reaction is agmatine + H2O = N-carbamoylputrescine + NH4(+). The sequence is that of Putative agmatine deiminase from Pectobacterium atrosepticum (strain SCRI 1043 / ATCC BAA-672) (Erwinia carotovora subsp. atroseptica).